The following is a 2533-amino-acid chain: Highly reducing polyketide synthase azaB (2533 aa).

The region spanning 7–433 (TAPMAIIGMA…GSNAHAILES (427 aa)) is the Ketosynthase family 3 (KS3) domain. Active-site for beta-ketoacyl synthase activity residues include cysteine 180, histidine 315, and histidine 355. Residues 554 to 821 (WVFTGQGAQW…VEFESSFRHM (268 aa)) are malonyl-CoA:ACP transacylase (MAT) domain. The tract at residues 946 to 1081 (SDLVGYSQPS…GRISVITTSD (136 aa)) is N-terminal hotdog fold. The PKS/mFAS DH domain occupies 946 to 1254 (SDLVGYSQPS…CQSLGRALDR (309 aa)). A dehydratase (DH) domain region spans residues 947-1251 (DLVGYSQPSI…GLTCQSLGRA (305 aa)). Histidine 978 serves as the catalytic Proton acceptor; for dehydratase activity. The tract at residues 1097–1254 (YNRRIDPRYM…CQSLGRALDR (158 aa)) is C-terminal hotdog fold. Aspartate 1163 functions as the Proton donor; for dehydratase activity in the catalytic mechanism. Residues 1419–1554 (TRQVSELVRL…GGKLILMETT (136 aa)) are methyltransferase (CMet) domain. An enoyl reductase (ER) domain region spans residues 1839–2155 (GLIDTLVFHD…TGQHMGKIII (317 aa)). The segment at 2178 to 2349 (ASYVIVGGLG…AVSLDLGIVR (172 aa)) is ketoreductase (KR) domain. The 78-residue stretch at 2455–2532 (DAAALICQEL…DLSLRVATKR (78 aa)) folds into the Carrier domain. Residue serine 2492 is modified to O-(pantetheine 4'-phosphoryl)serine.

Its pathway is secondary metabolite biosynthesis. In terms of biological role, highly reducing polyketide synthase; part of the gene cluster that mediates the biosynthesis of azaphilones, a class of fungal metabolites characterized by a highly oxygenated pyrano-quinone bicyclic core and exhibiting a broad range of bioactivities. In the first step, the non-reducing polyketide synthase azaA forms the hexaketide precursor from successive condensations of five malonyl-CoA units, presumably with a simple acetyl-CoA starter unit. The reactive polyketide chain then undergoes a PT-mediated C2-C7 cyclization to afford the aromatic ring and is eventually released as an aldehyde through the R-domain. The putative ketoreductase azaE is proposed to catalyze the reduction of the terminal ketone resulting in the early culture product FK17-P2a. The monooxygenase azaH was demonstrated to be the only enzyme required to convert FK17-P2a to azanigerone E. AzaH first hydroxylates the benzaldehyde intermediate FK17-P2a at C4, which triggers the formation of the pyran-ring to afford azanigerone E. In parallel, the 2,4-dimethylhexanoyl chain is synthesized by the HR-PKS azaB and is proposed to be transferred to the C4-hydroxyl of azanigerone E by the acyltransferase azaD directly from the ACP domain of azaB. Alternatively, the 2,4-dimethyl-hexanoyl chain may be offloaded from the HR-PKS as a carboxylic acid and converted to an acyl-CoA by azaF. The resulting acyl-CoA molecule could then be taken up as a substrate by AzaD to form azanigerone B. To yield the carboxylic acid substituent in azanigerone A, the hydroxypropyl side chain of azanigerone B would need to undergo a C-C oxidative cleavage catalyzed by cytochrome P450 AzaI. AzaI is proposed to act on a vicinal diol that leads to a C-C bond scission either through an alkoxyradical intermediate or a peroxy complex. In the biosynthesis of azanigerone A, azanigerone B first undergoes hydroxylation at C10, possibly catalyzed by one of the two FAD-dependent monooxygenases encoded in the cluster, azaG or azaL, resulting in the vicinal diol azanigerone C. Oxidative cleavage of azanigerone C by azaI would yield the corresponding aldehyde derivative of azanigerone A. Finally, the dehydrogenase azaJ is proposed to convert the aldehyde functional group into the carboxylic acid, completing the conversion from azanigerone B to azanigerone A. Alternatively, the oxidation of aldehyde to carboxylic acid may be catalyzed by the same P450 enzyme azaI via consecutive oxidation or by endogenous alcohol dehydrogenase. The chain is Highly reducing polyketide synthase azaB from Aspergillus niger (strain ATCC 1015 / CBS 113.46 / FGSC A1144 / LSHB Ac4 / NCTC 3858a / NRRL 328 / USDA 3528.7).